Reading from the N-terminus, the 418-residue chain is uncharacterized protein (418 aa).

The segment at 1–24 is disordered; it reads MSGTAGFITVSPGPPTEAPGGFPR.

It to A.pernix APE_1276 and S.solfataricus SSO2105.

This is an uncharacterized protein from Aeropyrum pernix (strain ATCC 700893 / DSM 11879 / JCM 9820 / NBRC 100138 / K1).